The sequence spans 1338 residues: Phosphoribosylformylglycinamidine synthase (1338 aa).

At S215 the chain carries Phosphoserine. ATP contacts are provided by residues G322 to D333 and A402 to F404. A Phosphoserine modification is found at S569. Phosphothreonine is present on residues T619 and T623. A706 lines the ATP pocket. Residues D707, E746, N750, and D909 each coordinate Mg(2+). Residue S911 participates in ATP binding. One can recognise a Glutamine amidotransferase type-1 domain in the interval R1064–V1302. Residue C1158 is the Nucleophile of the active site. Active-site residues include H1297 and E1299.

In the N-terminal section; belongs to the FGAMS family.

The protein localises to the cytoplasm. It catalyses the reaction N(2)-formyl-N(1)-(5-phospho-beta-D-ribosyl)glycinamide + L-glutamine + ATP + H2O = 2-formamido-N(1)-(5-O-phospho-beta-D-ribosyl)acetamidine + L-glutamate + ADP + phosphate + H(+). Its pathway is purine metabolism; IMP biosynthesis via de novo pathway; 5-amino-1-(5-phospho-D-ribosyl)imidazole from N(2)-formyl-N(1)-(5-phospho-D-ribosyl)glycinamide: step 1/2. Phosphoribosylformylglycinamidine synthase involved in the purines biosynthetic pathway. Catalyzes the ATP-dependent conversion of formylglycinamide ribonucleotide (FGAR) and glutamine to yield formylglycinamidine ribonucleotide (FGAM) and glutamate. The sequence is that of Phosphoribosylformylglycinamidine synthase (PFAS) from Homo sapiens (Human).